A 129-amino-acid chain; its full sequence is Large ribosomal subunit protein uL14m (129 aa).

It belongs to the universal ribosomal protein uL14 family. In terms of assembly, component of the mitochondrial ribosome large subunit (39S) which comprises a 16S rRNA and about 50 distinct proteins.

The protein localises to the mitochondrion. In Dictyostelium discoideum (Social amoeba), this protein is Large ribosomal subunit protein uL14m (mrpl14).